The following is a 462-amino-acid chain: MEYRIERDTMGEVKVPADKFWGAQTQRSKENFKIGSEKMPMRVVKAFAILKRSTALANKRLGNLDAEKAEAIAAVCDDVLKGKYDDNFPLVVWQTGSGTQSNMNMNEVVANRATALLKEKNSDQTIHPNDDVNRSQSSNDTFPTAMHVAAVLAVYEQLVPALDQLRNTLDEKAKAYNDIVKIGRTHLQDATPLTLGQEISGWVHMLDRSKEMILEATDKMRALAIGGTAVGTGINAHPEFGELVSEEITKLTGQTFSSSPNKFHALTSHDEITYAHGALKALAADLMKIANDVRWLASGPRCGIGEIVIPENEPGSSIMPGKVNPTQSEALTMIAAQIMGNDATIGFAASQGNFELNVFKPVIIYNFLQSVQLLSDGMNSFHDKCAVGIEPNKETIQENLSNSLMLVTALNPHIGYENAAKIAKLAHKEGLTLKEAALKLELLTEEQFNEMVKPEDMVKPKA.

Residues 97 to 99 (SGT), 127 to 130 (HPND), 137 to 139 (SSN), and Thr-185 contribute to the substrate site. The active-site Proton donor/acceptor is the His-186. Residue Ser-316 is part of the active site. Substrate contacts are provided by residues Ser-317 and 322 to 324 (KVN).

It belongs to the class-II fumarase/aspartase family. Fumarase subfamily. As to quaternary structure, homotetramer.

It is found in the cytoplasm. It carries out the reaction (S)-malate = fumarate + H2O. The protein operates within carbohydrate metabolism; tricarboxylic acid cycle; (S)-malate from fumarate: step 1/1. In terms of biological role, involved in the TCA cycle. Catalyzes the stereospecific interconversion of fumarate to L-malate. This chain is Fumarate hydratase class II, found in Bacillus subtilis (strain 168).